Consider the following 343-residue polypeptide: Glyceraldehyde-3-phosphate dehydrogenase (343 aa).

NAD(+) contacts are provided by residues 11–12 (TI) and glycine 110. 139–141 (SCN) serves as a coordination point for D-glyceraldehyde 3-phosphate. The Nucleophile role is filled by cysteine 140. Arginine 168 serves as a coordination point for NAD(+). Residue 194–195 (HG) coordinates D-glyceraldehyde 3-phosphate. Glutamine 301 is an NAD(+) binding site.

It belongs to the glyceraldehyde-3-phosphate dehydrogenase family. Homotetramer.

It is found in the cytoplasm. It catalyses the reaction D-glyceraldehyde 3-phosphate + phosphate + NADP(+) = (2R)-3-phospho-glyceroyl phosphate + NADPH + H(+). The catalysed reaction is D-glyceraldehyde 3-phosphate + phosphate + NAD(+) = (2R)-3-phospho-glyceroyl phosphate + NADH + H(+). Its pathway is carbohydrate degradation; glycolysis; pyruvate from D-glyceraldehyde 3-phosphate: step 1/5. The polypeptide is Glyceraldehyde-3-phosphate dehydrogenase (Methanoregula boonei (strain DSM 21154 / JCM 14090 / 6A8)).